We begin with the raw amino-acid sequence, 158 residues long: C-type lectin TsL (158 aa).

The N-terminal stretch at 1 to 23 (MGRFIFVSFGLLVVFLSLSGAKG) is a signal peptide. In terms of domain architecture, C-type lectin spans 24 to 158 (SCCTNDSLPM…KNSFLCQCKF (135 aa)). Intrachain disulfides connect Cys26/Cys37, Cys54/Cys154, Cys61/Cys156, and Cys129/Cys146. N-linked (GlcNAc...) (high mannose) asparagine glycosylation occurs at Asn28. Ca(2+) is bound by residues Gln119, Asp121, Glu127, Asn142, and Asp143. The short motif at 119–121 (QPD) is the Galactose-binding element.

It belongs to the true venom lectin family. In terms of assembly, homodimer; disulfide-linked. Expressed by the venom gland.

It is found in the secreted. Functionally, galactose-binding protein which recognizes specific carbohydrate structures and agglutinates a variety of animal cells by binding to cell-surface glycoproteins and glycolipids. May be a calcium-dependent lectin. The protein is C-type lectin TsL of Trimeresurus stejnegeri (Chinese green tree viper).